The sequence spans 414 residues: Transforming growth factor beta-2 proprotein (414 aa).

The N-terminal stretch at 1–20 (MHYCVLSTFLLLHLVPVALS) is a signal peptide. N-linked (GlcNAc...) asparagine glycans are attached at residues Asn-72, Asn-140, and Asn-241. 4 disulfide bridges follow: Cys-309–Cys-318, Cys-317–Cys-380, Cys-346–Cys-411, and Cys-350–Cys-413.

Belongs to the TGF-beta family. Interacts with the serine proteases, HTRA1 and HTRA3. Interacts with ASPN. Interacts with MFAP5. In terms of assembly, interacts with Transforming growth factor beta-2 (TGF-beta-2) chain; interaction is non-covalent and maintains (TGF-beta-2) in a latent state. Interacts with LRRC32/GARP; leading to regulate activation of TGF-beta-2. Interacts with NREP; the interaction results in a decrease in TGFB2 autoinduction. As to quaternary structure, transforming growth factor beta-2: Homodimer; disulfide-linked. Transforming growth factor beta-2: Interacts with TGF-beta receptors (TGFBR1 and TGFBR2), leading to signal transduction. Post-translationally, the precursor proprotein is cleaved in the Golgi apparatus to form Transforming growth factor beta-2 (TGF-beta-2) and Latency-associated peptide (LAP) chains, which remain non-covalently linked, rendering TGF-beta-2 inactive.

The protein resides in the secreted. It is found in the extracellular space. Its subcellular location is the extracellular matrix. Precursor of the Latency-associated peptide (LAP) and Transforming growth factor beta-2 (TGF-beta-2) chains, which constitute the regulatory and active subunit of TGF-beta-2, respectively. Its function is as follows. Required to maintain the Transforming growth factor beta-2 (TGF-beta-2) chain in a latent state during storage in extracellular matrix. Associates non-covalently with TGF-beta-2 and regulates its activation via interaction with 'milieu molecules', such as LTBP1 and LRRC32/GARP, that control activation of TGF-beta-2. In terms of biological role, multifunctional protein that regulates various processes such as angiogenesis and heart development. Activation into mature form follows different steps: following cleavage of the proprotein in the Golgi apparatus, Latency-associated peptide (LAP) and Transforming growth factor beta-2 (TGF-beta-2) chains remain non-covalently linked rendering TGF-beta-2 inactive during storage in extracellular matrix. At the same time, LAP chain interacts with 'milieu molecules', such as LTBP1 and LRRC32/GARP, that control activation of TGF-beta-2 and maintain it in a latent state during storage in extracellular milieus. Once activated following release of LAP, TGF-beta-2 acts by binding to TGF-beta receptors (TGFBR1 and TGFBR2), which transduce signal. The protein is Transforming growth factor beta-2 proprotein (Tgfb2) of Mus musculus (Mouse).